The sequence spans 380 residues: Peptide chain release factor 1-like, mitochondrial (380 aa).

A mitochondrion-targeting transit peptide spans Met1 to Leu26. A coiled-coil region spans residues Glu63 to Leu117. Residues Pro236 to Leu300 are GGQ domain. Residues Gly250–Gln252 carry the GGQ motif. Position 252 is an N5-methylglutamine (Gln252).

Belongs to the prokaryotic/mitochondrial release factor family. In terms of processing, methylation of glutamine in the GGQ triplet by HEMK1 is conserved from bacteria to mammals. In terms of tissue distribution, expressed in skeletal muscle (at protein level).

Its subcellular location is the mitochondrion. Mitochondrial peptide chain release factor that directs the termination of translation in response to the peptide chain termination codons UAA and UAG. The protein is Peptide chain release factor 1-like, mitochondrial of Homo sapiens (Human).